A 241-amino-acid polypeptide reads, in one-letter code: Cobalt transport protein CbiM (241 aa).

An N-terminal signal peptide occupies residues 1 to 24 (MKKIKIISFSVAYLILLTPIYASA). Transmembrane regions (helical) follow at residues 30–50 (GFLP…FIVG), 67–87 (LLLG…LPSV), 99–119 (LGTI…VLIF), 131–151 (TLGA…YFIF), 160–180 (SLAV…VTSL), and 202–222 (GIFA…TLIV).

This sequence belongs to the CbiM family. In terms of assembly, forms an energy-coupling factor (ECF) transporter complex composed of an ATP-binding protein (A component, CbiO), a transmembrane protein (T component, CbiQ) and 2 possible substrate-capture proteins (S components, CbiM and CbiN) of unknown stoichimetry.

It is found in the cell membrane. It functions in the pathway cofactor biosynthesis; adenosylcobalamin biosynthesis. Functionally, part of the energy-coupling factor (ECF) transporter complex CbiMNOQ involved in cobalt import. This is Cobalt transport protein CbiM from Acetoanaerobium sticklandii (strain ATCC 12662 / DSM 519 / JCM 1433 / CCUG 9281 / NCIMB 10654 / HF) (Clostridium sticklandii).